The primary structure comprises 492 residues: Probable Xaa-Pro aminopeptidase ACLA_020440 (492 aa).

The Mn(2+) site is built by Asp272, Asp283, Glu421, and Glu460.

This sequence belongs to the peptidase M24B family. It depends on Mn(2+) as a cofactor.

The enzyme catalyses Release of any N-terminal amino acid, including proline, that is linked to proline, even from a dipeptide or tripeptide.. Its function is as follows. Catalyzes the removal of a penultimate prolyl residue from the N-termini of peptides. This chain is Probable Xaa-Pro aminopeptidase ACLA_020440, found in Aspergillus clavatus (strain ATCC 1007 / CBS 513.65 / DSM 816 / NCTC 3887 / NRRL 1 / QM 1276 / 107).